A 343-amino-acid chain; its full sequence is Histone H1.8 (343 aa).

A compositionally biased stretch (low complexity) spans 1–32 (MAPGSIASSDTSSSTSSSSTSSASSASAEGSS). Disordered stretches follow at residues 1–50 (MAPG…VRAP) and 122–343 (ATGS…EAEG). Residues 52–130 (RHPPVLRMVL…GATGSFKLVP (79 aa)) form the H15 domain. The segment covering 132-142 (DKRKIPPRKTA) has biased composition (basic residues). 3 stretches are compositionally biased toward basic and acidic residues: residues 150 to 183 (EGKDPKKPSESKKDPANTVEVKKGSRKPREERAA), 199 to 219 (QTKDPEPRLGEAKKSSRRPDK), and 235 to 247 (KVKERGSRQADTK). The Nuclear localization signal signature appears at 161 to 176 (KKDPANTVEVKKGSRK). Polar residues predominate over residues 253–265 (QPGSQSSKSTVTK).

The protein belongs to the histone H1/H5 family. Oocyte (at protein level).

It is found in the cytoplasm. The protein resides in the nucleus. It localises to the chromosome. May play a key role in the control of gene expression during oogenesis and early embryogenesis, presumably through the perturbation of chromatin structure. Essential for meiotic maturation of germinal vesicle-stage oocytes. The somatic type linker histone H1c is rapidly replaced by H1oo in a donor nucleus transplanted into an oocyte. The greater mobility of H1oo as compared to H1c may contribute to this rapid replacement and increased instability of the embryonic chromatin structure. The rapid replacement of H1c with H1oo may play an important role in nuclear remodeling. The chain is Histone H1.8 from Bos taurus (Bovine).